A 118-amino-acid chain; its full sequence is Basic phospholipase A2 PA-12A (118 aa).

Disulfide bonds link C11-C71, C27-C117, C29-C45, C44-C98, C51-C91, C60-C84, and C78-C89. Ca(2+) contacts are provided by Y28, G30, and G32. H48 is an active-site residue. Ca(2+) is bound at residue D49. Residue D92 is part of the active site.

Belongs to the phospholipase A2 family. Group I subfamily. D49 sub-subfamily. The cofactor is Ca(2+). In terms of tissue distribution, expressed by the venom gland.

It is found in the secreted. The catalysed reaction is a 1,2-diacyl-sn-glycero-3-phosphocholine + H2O = a 1-acyl-sn-glycero-3-phosphocholine + a fatty acid + H(+). Its function is as follows. PLA2 catalyzes the calcium-dependent hydrolysis of the 2-acyl groups in 3-sn-phosphoglycerides. This chain is Basic phospholipase A2 PA-12A, found in Pseudechis australis (Mulga snake).